The primary structure comprises 240 residues: uncharacterized protein (240 aa).

The next 2 membrane-spanning stretches (helical) occupy residues 16–36 and 67–87; these read AVFFLYAALAIIGFAIGYFIP and FITALLGMCAGIWFAHSVIAM.

Its subcellular location is the cell membrane. This is an uncharacterized protein from Bacillus subtilis (strain 168).